A 246-amino-acid chain; its full sequence is Peroxisomal membrane protein 11A (246 aa).

The Cytoplasmic portion of the chain corresponds to 1-93 (MDAFIRVANQ…LCLTLANLNR (93 aa)). Residues 94 to 114 (VVYYICDTVLWAKSVGLTSGI) form a helical membrane-spanning segment. The Lumenal portion of the chain corresponds to 115 to 217 (NREKWQMRAA…LNQLGIYKSN (103 aa)). A helical transmembrane segment spans residues 218–238 (LGVVGFGGLVSSVAGLITVVY). The segment at 218 to 238 (LGVVGFGGLVSSVAGLITVVY) is required for homodimerization, interaction with PEX11G, and peroxisomal localization. Over 239–246 (PQLKLKAR) the chain is Cytoplasmic.

It belongs to the peroxin-11 family. In terms of assembly, homodimer. Heterodimer with PEX11G. Probably interacts with COPB2 and COPA. Interacts with PEX19. Interacts with FIS1. Expressed at high levels in kidney, liver, lung, brain, and testis and at low levels in heart, spleen and skeletal muscle.

Its subcellular location is the peroxisome membrane. Its function is as follows. May be involved in peroxisomal proliferation and may regulate peroxisomes division. May mediate binding of coatomer proteins to the peroxisomal membrane. Promotes membrane protrusion and elongation on the peroxisomal surface. The chain is Peroxisomal membrane protein 11A (Pex11a) from Rattus norvegicus (Rat).